We begin with the raw amino-acid sequence, 1451 residues long: MGMFVLLLYTFLYAGDLGHGAEKSFPVLNIAVILGRTRYITERDIRSLWTRDMSLDFDVNVVTLLVNQTDPKSIITHVCDLMSGTKIHGVVFGDDTDQEAIAQILDFVSSQTFIPILGIHGGSSMIMADKDEMSTFFQFGASIKQQATVMLNIMEEYDWHVFSVITSNFPGYRDFISFIKTTVDNSFVGWEVQNYITLDTSYTDAQTLTQLKKIHSSVILLYCSKDEATYIFEEARSLGLMGYGFVWIVPSLVTGNTDIIPYEFPSGLVSVSYDDWDYGIEARVRDGLGIITTAASAMLEKHSVIPEAKTSCYGQNERNDPPLHTLHNFMINVTWDGKDLSFTEDGYQANPKLVVLLLNMEREWEKVGKWENKSLNMKYPVWPRITASLDSDHDDNHLSIVTLEEAPFVIVENIDYLTGTCVRNTVPCRKYFRLNNSTTEGTSVKKCCKGFCIDILKKLSKTVKFTYDLYLVTNGKHGKKIKNVWNGMIGEVVYKRAVMAVGSLTINEERSVAVDFSVPFVETGISVMVSRSNGTVSPSAFLEPFSASVWVMMFVMLLLVSAMAVFIFEYFSPVGYNRNLAQGKDPHGPSFTIGKAVWLLWGLVFNNSVPVQNPKGTTSKIIVSIWAFFAVIFLASYTANLAAFMIQEEFVDQVTGLSDNKFQRPHDYSPPFRFGTVPNGSTERNIRNNYPDMHQYMVKFHQKGVQDALVSLKTGKLDAFIYDAAVLNYMAGRDEGCKLVTIGSGYIFATTGYGIALQKGSRWKRPIDLALLQFVGDGEMEELEKLWLTGICHTEKNEVMSSQLDIDNMAGVFYMLAAAMALSLITFVWEHLFYWKLRFCFTGVCTGTPGLLFSISRGIYSCIHGVHIEEKKKSPDFSFTASQTNMLKLLRASKNIANLSNLNQSQCNSPKRTSDYIQRNSLLTDMVLDKGNLTYSDNRPFQQKDIYSENTYDLAMLSANCPKDNLNNYVFQGQHPLTLNESNPNTVEVAVSAEAKVNTRPRQLWKKSVETLRQTQGSVNENGTEESKSSIKNQRFLPEDGHFSDVSEASSRATCHIDSENNNKHRKSKDNLKKRPVSAKYARECSEVELSYLKIKHGPNRDKVYTIDGDKEPSFIMDQPKYSENSPDQDDEDYPDVYQDHNDNYRKTEPLQSDRTPLHSEGRLPNNDIQYKLFSKHYNLKEKNTSMSDANDRHRQNSTHCRSCLSNMPNYTGHYTARSPYKCDDCLHTGKLYDIDEDQMLHEAANSMHSEDFYEHNWLENNALHFQKKNKLRINRQHSCDNINKPREHDLGRPPRSLSLKEKERYIQENPFAKFVIVPPEKLLGNNASLFTDSLKDSKRSKSLYPDNSSDNPFLHSYQETQKLSHGRSSSDIYKQSSLPKARNDNYLRSSIKSTTSYSSRDGRVPDDMCVSEYALPYVTSNNSVYSAPRVVNSCSNRRVFKKMPSLESDV.

Residues 1 to 20 (MGMFVLLLYTFLYAGDLGHG) form the signal peptide. Over 21-547 (AEKSFPVLNI…PSAFLEPFSA (527 aa)) the chain is Extracellular. Residue Asn67 is glycosylated (N-linked (GlcNAc...) asparagine). A disulfide bridge links Cys79 with Cys312. Residues His120, Asp258, and Asp274 each contribute to the Zn(2+) site. Residues Asn332, Asn372, Asn435, and Asn436 are each glycosylated (N-linked (GlcNAc...) asparagine). 2 cysteine pairs are disulfide-bonded: Cys421-Cys447 and Cys428-Cys448. Residues Ser503, Thr505, and Arg510 each contribute to the L-glutamate site. A glycan (N-linked (GlcNAc...) asparagine) is linked at Asn533. Residues 548–568 (SVWVMMFVMLLLVSAMAVFIF) traverse the membrane as a helical segment. The Cytoplasmic segment spans residues 569–592 (EYFSPVGYNRNLAQGKDPHGPSFT). Positions 591-612 (FTIGKAVWLLWGLVFNNSVPVQ) are pore-forming. The segment at residues 593-612 (IGKAVWLLWGLVFNNSVPVQ) is an intramembrane region (discontinuously helical). Topologically, residues 613–617 (NPKGT) are cytoplasmic. The helical transmembrane segment at 618–637 (TSKIIVSIWAFFAVIFLASY) threads the bilayer. Topologically, residues 638 to 808 (TANLAAFMIQ…VMSSQLDIDN (171 aa)) are extracellular. Asn679 carries N-linked (GlcNAc...) asparagine glycosylation. Residues Ser681, Thr682, and Asp723 each coordinate L-glutamate. An intrachain disulfide couples Cys737 to Cys792. A helical membrane pass occupies residues 809–829 (MAGVFYMLAAAMALSLITFVW). The Cytoplasmic segment spans residues 830 to 1451 (EHLFYWKLRF…KKMPSLESDV (622 aa)). Polar residues predominate over residues 1011–1022 (TLRQTQGSVNEN). Disordered regions lie at residues 1011-1080 (TLRQ…VSAK) and 1100-1165 (NRDK…GRLP). 3 stretches are compositionally biased toward basic and acidic residues: residues 1055 to 1073 (CHIDSENNNKHRKSKDNLK), 1100 to 1113 (NRDKVYTIDGDKEP), and 1138 to 1149 (YQDHNDNYRKTE).

The protein belongs to the glutamate-gated ion channel (TC 1.A.10.1) family. Heterotetramer. Forms heterotetrameric channels composed of two GluN1/zeta subunits (GRIN1), and two identical GluN2/epsilon subunits (GRIN2A, GRIN2B, GRIN2C or GRIN2D) or GluN3 subunits (GRIN3A or GRIN3B) (in vitro). In vivo, the subunit composition may depend on the expression levels of the different subunits.

Its subcellular location is the cell membrane. The protein localises to the postsynaptic cell membrane. It carries out the reaction Ca(2+)(in) = Ca(2+)(out). It catalyses the reaction Na(+)(in) = Na(+)(out). The enzyme catalyses K(+)(in) = K(+)(out). Functionally, component of N-methyl-D-aspartate (NMDA) receptors (NMDARs) that function as heterotetrameric, ligand-gated cation channels with high calcium permeability and voltage-dependent block by Mg(2+). MDARs participate in synaptic plasticity. Channel activation requires binding of the neurotransmitter L-glutamate to the GluN2 subunit, glycine binding to the GluN1 subunit, plus membrane depolarization to eliminate channel inhibition by Mg(2+). NMDARs mediate simultaneously the potasium efflux and the influx of calcium and sodium. Each GluN2 subunit confers differential attributes to channel properties, including activation, deactivation and desensitization kinetics, pH sensitivity, Ca2(+) permeability, and binding to allosteric modulators. Plays a role in dendritic branching in brain neurons and in synaptic plasticity. The protein is Glutamate receptor ionotropic, NMDA 2A of Xenopus laevis (African clawed frog).